The primary structure comprises 619 residues: Eukaryotic translation initiation factor 2-alpha kinase 1 (619 aa).

The tract at residues 1 to 40 (MLGGSSVDGERDTDDDAAGAVAAPPAIDFPAEVSDPKYDE) is disordered. Over residues 18–28 (AGAVAAPPAID) the composition is skewed to low complexity. Residues 85–104 (LHSKQVFKLLCQTFIKMGLL) carry the SIFI-degron motif. Residues 167–580 (FEELAILGKG…ALQLLQSELF (414 aa)) enclose the Protein kinase domain. ATP-binding positions include 173 to 181 (LGKGGYGRV) and Lys196. Phosphothreonine is present on Thr283. One copy of the HRM 1 repeat lies at 408-413 (ACPYVM). The Proton acceptor role is filled by Asp440. Thr483, Thr485, and Thr490 each carry phosphothreonine; by autocatalysis. An HRM 2 repeat occupies 549–554 (RCPVQA).

The protein belongs to the protein kinase superfamily. Ser/Thr protein kinase family. GCN2 subfamily. Synthesized in an inactive form that binds to the N-terminal domain of CDC37. Has to be associated with a multiprotein complex containing Hsp90, CDC37 and PPP5C for maturation and activation by autophosphorylation. The phosphatase PPP5C modulates this activation. Homodimer; homodimerizes in presence of heme, forming a disulfide-linked inactive homodimer. Interacts with DELE1; binds both to full-length DELE1 and processed form of DELE1 (S-DELE1) in response to stress, leading to activate its protein kinase activity and trigger the integrated stress response (ISR). Post-translationally, activated by autophosphorylation; phosphorylated predominantly on serine and threonine residues, but also on tyrosine residues. Autophosphorylation at Thr-485 is required for kinase activation. The active autophosphorylated form apparently is largely refractory to cellular heme fluctuations. In terms of processing, ubiquitinated and degraded by the SIFI complex once the mitochondrial stress has been resolved, thereby providing stress response silencing. Within the SIFI complex, UBR4 initiates ubiquitin chain that are further elongated or branched by KCMF1. In terms of tissue distribution, expressed predominantly in erythroid cells, mature reticulocytes, as well as fetal liver nucleated erythroid cells. At much lower levels, expressed in hepatocytes and bone marrow-derived macrophages (at protein level).

The protein localises to the cytoplasm. The catalysed reaction is L-seryl-[protein] + ATP = O-phospho-L-seryl-[protein] + ADP + H(+). It catalyses the reaction L-threonyl-[protein] + ATP = O-phospho-L-threonyl-[protein] + ADP + H(+). Its activity is regulated as follows. In normal conditions, the protein kinase activity is inhibited; inhibition is relieved by various stress conditions. Inhibited by heme: in presence of heme, forms a disulfide-linked inactive homodimer. Heme depletion relieves inhibition and stimulates kinase activity by autophosphorylation. Inhibited by the heme metabolites biliverdin and bilirubin. Induced by oxidative stress generated by arsenite treatment. Binding of nitric oxide (NO) to the heme iron in the N-terminal heme-binding domain activates the kinase activity, while binding of carbon monoxide (CO) suppresses kinase activity. Protein kinase activity is also activated upon binding to DELE1 in response to various stress, triggering the integrated stress response (ISR): activated by full-length DELE1 in response to iron deficiency, while it is activated by the processed form of DELE1 (S-DELE1) in response to mitochondrial stress. Metabolic-stress sensing protein kinase that phosphorylates the alpha subunit of eukaryotic translation initiation factor 2 (EIF2S1/eIF-2-alpha) in response to various stress conditions. Key activator of the integrated stress response (ISR) required for adaptation to various stress, such as heme deficiency, oxidative stress, osmotic shock, mitochondrial dysfunction and heat shock. EIF2S1/eIF-2-alpha phosphorylation in response to stress converts EIF2S1/eIF-2-alpha in a global protein synthesis inhibitor, leading to a global attenuation of cap-dependent translation, while concomitantly initiating the preferential translation of ISR-specific mRNAs, such as the transcriptional activator ATF4, and hence allowing ATF4-mediated reprogramming. Acts as a key sensor of heme-deficiency: in normal conditions, binds hemin via a cysteine thiolate and histidine nitrogenous coordination, leading to inhibit the protein kinase activity. This binding occurs with moderate affinity, allowing it to sense the heme concentration within the cell: heme depletion relieves inhibition and stimulates kinase activity, activating the ISR. Thanks to this unique heme-sensing capacity, plays a crucial role to shut off protein synthesis during acute heme-deficient conditions. In red blood cells (RBCs), controls hemoglobin synthesis ensuring a coordinated regulation of the synthesis of its heme and globin moieties. It thereby plays an essential protective role for RBC survival in anemias of iron deficiency. Iron deficiency also triggers activation by full-length DELE1. Also activates the ISR in response to mitochondrial dysfunction: HRI/EIF2AK1 protein kinase activity is activated upon binding to the processed form of DELE1 (S-DELE1), thereby promoting the ATF4-mediated reprogramming. Also acts as an activator of mitophagy in response to mitochondrial damage: catalyzes phosphorylation of eIF-2-alpha (EIF2S1) following activation by S-DELE1, thereby promoting mitochondrial localization of EIF2S1, triggering PRKN-independent mitophagy. This is Eukaryotic translation initiation factor 2-alpha kinase 1 from Mus musculus (Mouse).